The sequence spans 980 residues: Envelope glycoprotein B (980 aa).

Residues 1 to 14 are compositionally biased toward polar residues; it reads MSSGCRSVGGSTWG. Disordered stretches follow at residues 1–20 and 88–118; these read MSSG…RGDG and TTPS…TETP. Positions 1–86 are cleaved as a signal peptide; it reads MSSGCRSVGG…LFGSCVVRAV (86 aa). At 87-849 the chain is on the virion surface side; that stretch reads PTTPSPPTST…SGIASFLNNP (763 aa). Residues 96–118 are compositionally biased toward low complexity; it reads TPTSMSTHSHGTVDPTLLPTETP. 5 disulfides stabilise this stretch: Cys140/Cys647, Cys157/Cys603, Cys231/Cys296, Cys389/Cys437, and Cys668/Cys708. A glycan (N-linked (GlcNAc...) asparagine; by host) is linked at Asn165. The involved in fusion and/or binding to host membrane stretch occupies residues 197 to 203; the sequence is VWKGYSH. A glycan (N-linked (GlcNAc...) asparagine; by host) is linked at Asn275. The interval 282 to 290 is involved in fusion and/or binding to host membrane; it reads GWMPWRHYT. N-linked (GlcNAc...) asparagine; by host glycosylation is found at Asn380, Asn423, Asn497, Asn514, Asn515, and Asn560. Residues 505–516 show a composition bias toward low complexity; that stretch reads LLNPNANNNNNT. Residues 505–535 form a disordered region; it reads LLNPNANNNNNTTRRRRSLLSVPEPQPTQDG. Residues Asn727 and Asn749 are each glycosylated (N-linked (GlcNAc...) asparagine; by host). 2 hydrophobic membrane proximal region regions span residues 794-847 and 823-843; these read IDSV…SFLN and AVGT…SGIA. Residues 850–870 traverse the membrane as a helical segment; that stretch reads FGGLAIGLLVIAGLVAAFFAY. The Intravirion portion of the chain corresponds to 871–980; sequence RYVMQIRSNP…NDTMENEKMV (110 aa). The Golgi targeting signature appears at 925 to 928; it reads YMSM. An N-linked (GlcNAc...) asparagine; by host glycan is attached at Asn952. The Internalization motif signature appears at 965–968; that stretch reads YTRL. Asn971 is a glycosylation site (N-linked (GlcNAc...) asparagine; by host).

Belongs to the herpesviridae glycoprotein B family. As to quaternary structure, homotrimer; disulfide-linked. Binds to heparan sulfate proteoglycans. Interacts with gH/gL heterodimer. A proteolytic cleavage by host furin generates two subunits that remain linked by disulfide bonds.

The protein localises to the virion membrane. It localises to the host cell membrane. Its subcellular location is the host endosome membrane. The protein resides in the host Golgi apparatus membrane. Functionally, envelope glycoprotein that forms spikes at the surface of virion envelope. Essential for the initial attachment to heparan sulfate moieties of the host cell surface proteoglycans. Involved in fusion of viral and cellular membranes leading to virus entry into the host cell. Following initial binding to its host receptors, membrane fusion is mediated by the fusion machinery composed at least of gB and the heterodimer gH/gL. May be involved in the fusion between the virion envelope and the outer nuclear membrane during virion egress. This chain is Envelope glycoprotein B, found in Equine herpesvirus 1 (strain HVS25A) (EHV-1).